We begin with the raw amino-acid sequence, 247 residues long: tRNA pseudouridine synthase A (247 aa).

D52 (nucleophile) is an active-site residue. Position 111 (Y111) interacts with substrate.

This sequence belongs to the tRNA pseudouridine synthase TruA family. As to quaternary structure, homodimer.

The catalysed reaction is uridine(38/39/40) in tRNA = pseudouridine(38/39/40) in tRNA. In terms of biological role, formation of pseudouridine at positions 38, 39 and 40 in the anticodon stem and loop of transfer RNAs. This Caulobacter vibrioides (strain ATCC 19089 / CIP 103742 / CB 15) (Caulobacter crescentus) protein is tRNA pseudouridine synthase A.